The chain runs to 68 residues: Metallothionein (68 aa).

The protein belongs to the metallothionein superfamily. Type 4 family.

Its function is as follows. Metallothioneins have a high content of cysteine residues that bind various heavy metals. The sequence is that of Metallothionein (MT1) from Lytechinus pictus (Painted sea urchin).